We begin with the raw amino-acid sequence, 489 residues long: 3-octaprenyl-4-hydroxybenzoate carboxy-lyase (489 aa).

Residue asparagine 172 participates in Mn(2+) binding. Prenylated FMN is bound by residues 175–177, 189–191, and 194–195; these read IYR, RWL, and RG. A Mn(2+)-binding site is contributed by glutamate 238. Aspartate 287 functions as the Proton donor in the catalytic mechanism.

It belongs to the UbiD family. Homohexamer. Requires prenylated FMN as cofactor. Mn(2+) is required as a cofactor.

The protein resides in the cell membrane. It catalyses the reaction a 4-hydroxy-3-(all-trans-polyprenyl)benzoate + H(+) = a 2-(all-trans-polyprenyl)phenol + CO2. It participates in cofactor biosynthesis; ubiquinone biosynthesis. In terms of biological role, catalyzes the decarboxylation of 3-octaprenyl-4-hydroxy benzoate to 2-octaprenylphenol, an intermediate step in ubiquinone biosynthesis. The sequence is that of 3-octaprenyl-4-hydroxybenzoate carboxy-lyase from Glaesserella parasuis serovar 5 (strain SH0165) (Haemophilus parasuis).